The sequence spans 447 residues: Probable glycine dehydrogenase (decarboxylating) subunit 1 (447 aa).

Belongs to the GcvP family. N-terminal subunit subfamily. As to quaternary structure, the glycine cleavage system is composed of four proteins: P, T, L and H. In this organism, the P 'protein' is a heterodimer of two subunits.

It carries out the reaction N(6)-[(R)-lipoyl]-L-lysyl-[glycine-cleavage complex H protein] + glycine + H(+) = N(6)-[(R)-S(8)-aminomethyldihydrolipoyl]-L-lysyl-[glycine-cleavage complex H protein] + CO2. Functionally, the glycine cleavage system catalyzes the degradation of glycine. The P protein binds the alpha-amino group of glycine through its pyridoxal phosphate cofactor; CO(2) is released and the remaining methylamine moiety is then transferred to the lipoamide cofactor of the H protein. The chain is Probable glycine dehydrogenase (decarboxylating) subunit 1 from Metallosphaera sedula (strain ATCC 51363 / DSM 5348 / JCM 9185 / NBRC 15509 / TH2).